The primary structure comprises 195 residues: Probable serine/threonine-protein kinase BUD32 homolog (195 aa).

In terms of domain architecture, Protein kinase spans 1 to 195 (MKVYLGGEAE…GRYVERVSMG (195 aa)). Residue Lys12 participates in ATP binding. Asp107 acts as the Proton acceptor in catalysis.

This sequence belongs to the protein kinase superfamily. Tyr protein kinase family. BUD32 subfamily.

The protein resides in the cytoplasm. The enzyme catalyses L-seryl-[protein] + ATP = O-phospho-L-seryl-[protein] + ADP + H(+). The catalysed reaction is L-threonyl-[protein] + ATP = O-phospho-L-threonyl-[protein] + ADP + H(+). Functionally, could be involved in the formation of a threonylcarbamoyl group on adenosine at position 37 (t(6)A37) in tRNAs that read codons beginning with adenine. This is Probable serine/threonine-protein kinase BUD32 homolog from Archaeoglobus fulgidus (strain ATCC 49558 / DSM 4304 / JCM 9628 / NBRC 100126 / VC-16).